The following is a 130-amino-acid chain: Small ribosomal subunit protein uS8 (130 aa).

It belongs to the universal ribosomal protein uS8 family. As to quaternary structure, part of the 30S ribosomal subunit.

In terms of biological role, one of the primary rRNA binding proteins, it binds directly to 16S rRNA central domain where it helps coordinate assembly of the platform of the 30S subunit. The chain is Small ribosomal subunit protein uS8 from Methanocella arvoryzae (strain DSM 22066 / NBRC 105507 / MRE50).